We begin with the raw amino-acid sequence, 332 residues long: Flotillin-like protein FloA (332 aa).

A run of 2 helical transmembrane segments spans residues 6–26 (LGYLILTFVVLLLLVLFFSFV) and 28–48 (VGLWISAAAADVRVGIFYMIG).

Belongs to the flotillin-like FloA family. Homooligomerizes.

It is found in the cell membrane. Its subcellular location is the membrane raft. Found in functional membrane microdomains (FMM) that may be equivalent to eukaryotic membrane rafts. FMMs are highly dynamic and increase in number as cells age. Flotillins are thought to be important factors in membrane fluidity. In Symbiobacterium thermophilum (strain DSM 24528 / JCM 14929 / IAM 14863 / T), this protein is Flotillin-like protein FloA.